A 404-amino-acid polypeptide reads, in one-letter code: Adenylosuccinate synthetase (404 aa).

Residues 12 to 18 and 40 to 42 contribute to the GTP site; these read GDEGKGK and GHT. The active-site Proton acceptor is the aspartate 13. Positions 13 and 40 each coordinate Mg(2+). Residues 13–16, 38–41, threonine 121, arginine 135, glutamine 213, threonine 228, and arginine 296 contribute to the IMP site; these read DEGK and NAGH. The active-site Proton donor is histidine 41. 292–298 provides a ligand contact to substrate; the sequence is TTTGRAR. GTP contacts are provided by residues arginine 298, 324–326, and 389–391; these read KMD and SCG.

It belongs to the adenylosuccinate synthetase family. As to quaternary structure, homodimer. Mg(2+) serves as cofactor.

It localises to the cytoplasm. It carries out the reaction IMP + L-aspartate + GTP = N(6)-(1,2-dicarboxyethyl)-AMP + GDP + phosphate + 2 H(+). Its pathway is purine metabolism; AMP biosynthesis via de novo pathway; AMP from IMP: step 1/2. Functionally, plays an important role in the de novo pathway of purine nucleotide biosynthesis. Catalyzes the first committed step in the biosynthesis of AMP from IMP. The sequence is that of Adenylosuccinate synthetase from Deinococcus geothermalis (strain DSM 11300 / CIP 105573 / AG-3a).